Here is a 374-residue protein sequence, read N- to C-terminus: Guanine nucleotide-binding protein subunit alpha-15 (374 aa).

Residues 41–374 (GELKLLLLGT…ARYLDEINLL (334 aa)) enclose the G-alpha domain. A G1 motif region spans residues 44 to 57 (KLLLLGTGESGKST). Residues 49-56 (GTGESGKS), 183-189 (LRSRMPT), 208-212 (DVGGQ), 277-280 (NKTD), and A346 contribute to the GTP site. Residues S56 and T189 each coordinate Mg(2+). Residues 181–189 (DVLRSRMPT) form a G2 motif region. The G3 motif stretch occupies residues 204–213 (LRIVDVGGQK). A G4 motif region spans residues 273-280 (ILFLNKTD). Residues 344-349 (TCATDT) are G5 motif.

This sequence belongs to the G-alpha family. G(q) subfamily. G proteins are composed of 3 units; alpha, beta and gamma. The alpha chain contains the guanine nucleotide binding site.

Guanine nucleotide-binding proteins (G proteins) are involved as modulators or transducers in various transmembrane signaling systems. In Oryctolagus cuniculus (Rabbit), this protein is Guanine nucleotide-binding protein subunit alpha-15 (GNA15).